The following is a 264-amino-acid chain: Claudin-18 (264 aa).

Over 1–6 the chain is Cytoplasmic; sequence MATTTC. The chain crosses the membrane as a helical span at residues 7–27; sequence QVVGLLLSLLGLAGCIAATGM. Topologically, residues 28–80 are extracellular; the sequence is DMWSTQDLYDNPVTAVFQYEGLWRSCVQQSSGFTECRPYFTILGLPAMLQAVR. Residues 81–101 traverse the membrane as a helical segment; sequence ALMIVGIVLGVIGILVSIFAL. Residues 102 to 122 are Cytoplasmic-facing; it reads KCIRIGSMDDSAKAKMTLTSG. The chain crosses the membrane as a helical span at residues 123-143; the sequence is ILFIISGICAIIGVSVFANML. At 144–176 the chain is on the extracellular side; sequence VTNFWMSTANMYSGMGGMGGMVQTVQTRYTFGA. Residues 177 to 197 traverse the membrane as a helical segment; it reads ALFVGWVAGGLTLIGGVMMCI. Residues 198–264 lie on the Cytoplasmic side of the membrane; that stretch reads ACRGLTPDDS…QSHPTKYDYV (67 aa). The segment at 198–264 is required for role in regulation of RANKL-induced osteoclast differentiation; it reads ACRGLTPDDS…QSHPTKYDYV (67 aa). Residue serine 217 is modified to Phosphoserine. The interval 241 to 264 is disordered; that stretch reads KKIYDGGARTEDDEQSHPTKYDYV. The segment covering 242 to 264 has biased composition (basic and acidic residues); sequence KIYDGGARTEDDEQSHPTKYDYV.

This sequence belongs to the claudin family. In terms of assembly, interacts with TJP2/ZO-2. Interacts with TJP1/ZO-1. Interacts with YAP1 (phosphorylated); the interaction sequesters YAP1 away from the nucleus and thereby restricts transcription of YAP1 target genes. Interacts with CLDN19. In terms of tissue distribution, expressed in the lung (at protein level). As to expression, expressed in lung. Expressed in the stomach. Expressed in lung. In terms of tissue distribution, expressed in stomach. Expressed in bone. As to expression, expressed in stomach.

The protein localises to the cell junction. The protein resides in the tight junction. Its subcellular location is the cell membrane. It is found in the lateral cell membrane. Involved in alveolar fluid homeostasis via regulation of alveolar epithelial tight junction composition and therefore ion transport and solute permeability, potentially via downstream regulation of the actin cytoskeleton organization and beta-2-adrenergic signaling. Required for lung alveolarization and maintenance of the paracellular alveolar epithelial barrier. Acts to maintain epithelial progenitor cell proliferation and organ size, via regulation of YAP1 localization away from the nucleus and thereby restriction of YAP1 target gene transcription. Acts as a negative regulator of RANKL-induced osteoclast differentiation, potentially via relocation of TJP2/ZO-2 away from the nucleus, subsequently involved in bone resorption in response to calcium deficiency. Mediates the osteoprotective effects of estrogen, potentially via acting downstream of estrogen signaling independently of RANKL signaling pathways. In terms of biological role, involved in the maintenance of homeostasis of the alveolar microenvironment via regulation of pH and subsequent T-cell activation in the alveolar space, is therefore indirectly involved in limiting C.neoformans infection. Functionally, required for the formation of the gastric paracellular barrier via its role in tight junction formation, thereby involved in the response to gastric acidification. This chain is Claudin-18 (Cldn18), found in Mus musculus (Mouse).